A 73-amino-acid chain; its full sequence is UPF0270 protein PMI2817 (73 aa).

This sequence belongs to the UPF0270 family.

The sequence is that of UPF0270 protein PMI2817 from Proteus mirabilis (strain HI4320).